Here is a 334-residue protein sequence, read N- to C-terminus: Protein-methionine-sulfoxide reductase catalytic subunit MsrP (334 aa).

Residues 1–44 (MKKNQFLKESDVTAESVFFMKRRQVLKALGISAAALSLPHAAHA) constitute a signal peptide (tat-type signal). Mo-molybdopterin is bound by residues Asn-88, 91 to 92 (YE), Cys-146, Thr-181, Asn-233, Arg-238, and 249 to 251 (GIK).

The protein belongs to the MsrP family. In terms of assembly, heterodimer of a catalytic subunit (MsrP) and a heme-binding subunit (MsrQ). Mo-molybdopterin serves as cofactor. Post-translationally, predicted to be exported by the Tat system. The position of the signal peptide cleavage has not been experimentally proven.

The protein localises to the periplasm. It carries out the reaction L-methionyl-[protein] + a quinone + H2O = L-methionyl-(S)-S-oxide-[protein] + a quinol. It catalyses the reaction L-methionyl-[protein] + a quinone + H2O = L-methionyl-(R)-S-oxide-[protein] + a quinol. Part of the MsrPQ system that repairs oxidized periplasmic proteins containing methionine sulfoxide residues (Met-O), using respiratory chain electrons. Thus protects these proteins from oxidative-stress damage caused by reactive species of oxygen and chlorine generated by the host defense mechanisms. MsrPQ is essential for the maintenance of envelope integrity under bleach stress, rescuing a wide series of structurally unrelated periplasmic proteins from methionine oxidation, including the primary periplasmic chaperone SurA and the lipoprotein Pal. The catalytic subunit MsrP is non-stereospecific, being able to reduce both (R-) and (S-) diastereoisomers of methionine sulfoxide. The protein is Protein-methionine-sulfoxide reductase catalytic subunit MsrP of Escherichia coli O17:K52:H18 (strain UMN026 / ExPEC).